A 171-amino-acid polypeptide reads, in one-letter code: Protein-export protein SecB (171 aa).

This sequence belongs to the SecB family. Homotetramer, a dimer of dimers. One homotetramer interacts with 1 SecA dimer.

The protein resides in the cytoplasm. Functionally, one of the proteins required for the normal export of preproteins out of the cell cytoplasm. It is a molecular chaperone that binds to a subset of precursor proteins, maintaining them in a translocation-competent state. It also specifically binds to its receptor SecA. The protein is Protein-export protein SecB of Gluconacetobacter diazotrophicus (strain ATCC 49037 / DSM 5601 / CCUG 37298 / CIP 103539 / LMG 7603 / PAl5).